Consider the following 520-residue polypeptide: Probable bifunctional tRNA threonylcarbamoyladenosine biosynthesis protein (520 aa).

Residues 1-318 form a kae1 region; that stretch reads MKIGPVLGIE…YRADQVLVTW (318 aa). 3 residues coordinate Fe cation: histidine 105, histidine 109, and tyrosine 126. Residues 126–130, aspartate 158, glycine 171, glutamate 175, and asparagine 251 each bind L-threonylcarbamoyladenylate; that span reads YASGA. Residue aspartate 279 participates in Fe cation binding. Residues 327–520 enclose the Protein kinase domain; that stretch reads RHPDAYSARG…HEIELRGRYL (194 aa). Residues 333–341 and lysine 350 contribute to the ATP site; that span reads SARGAEAIV. Aspartate 437 functions as the Proton acceptor; for kinase activity in the catalytic mechanism.

It in the N-terminal section; belongs to the KAE1 / TsaD family. In the C-terminal section; belongs to the protein kinase superfamily. Tyr protein kinase family. BUD32 subfamily. Component of the KEOPS complex that consists of Kae1, Bud32, Cgi121 and Pcc1; the whole complex dimerizes. Requires Fe(2+) as cofactor.

It localises to the cytoplasm. The enzyme catalyses L-seryl-[protein] + ATP = O-phospho-L-seryl-[protein] + ADP + H(+). It catalyses the reaction L-threonyl-[protein] + ATP = O-phospho-L-threonyl-[protein] + ADP + H(+). The catalysed reaction is L-threonylcarbamoyladenylate + adenosine(37) in tRNA = N(6)-L-threonylcarbamoyladenosine(37) in tRNA + AMP + H(+). In terms of biological role, required for the formation of a threonylcarbamoyl group on adenosine at position 37 (t(6)A37) in tRNAs that read codons beginning with adenine. Is a component of the KEOPS complex that is probably involved in the transfer of the threonylcarbamoyl moiety of threonylcarbamoyl-AMP (TC-AMP) to the N6 group of A37. The Kae1 domain likely plays a direct catalytic role in this reaction. The Bud32 domain probably displays kinase activity that regulates Kae1 function. This Methanospirillum hungatei JF-1 (strain ATCC 27890 / DSM 864 / NBRC 100397 / JF-1) protein is Probable bifunctional tRNA threonylcarbamoyladenosine biosynthesis protein.